A 381-amino-acid chain; its full sequence is MIGNPVIQVPSSLMPSSSMIACPRVSPNGVPYLPPKPRTRHLVVRAASNSDAAHGQPSSDGGKNPLTVVLDVPRNIWRQTLKPLSDFGFGKRSIWEGGVGLFIVSGATLLALSWAWLRGFQMRSKFRKYQTVFELSHASGICTGTPVRIRGVTVGTIIRVNPSLKNIEAVAEIEDDKIIIPRNSLVEVNQSGLLMETMIDIMPRNPIPEPSVGPLHPECGKEGLIVCDRQTIKGVQGVSLDELVGIFTRIGREVEAIGVANTYSLAERAASVIEEARPLLKKIQAMAEDAQPLLSEFRDSGLLKEVECLTRSLTQASDDLRKVNSSIMTPENTELIQKSIYTLVYTLKNVESISSDILGFTGDEATRKNLKLLIKSLSRLL.

Residues 1–45 (MIGNPVIQVPSSLMPSSSMIACPRVSPNGVPYLPPKPRTRHLVVR) constitute a chloroplast transit peptide. The Stromal portion of the chain corresponds to 46–96 (AASNSDAAHGQPSSDGGKNPLTVVLDVPRNIWRQTLKPLSDFGFGKRSIWE). Residues 97–117 (GGVGLFIVSGATLLALSWAWL) traverse the membrane as a helical segment. The Chloroplast intermembrane portion of the chain corresponds to 118–381 (RGFQMRSKFR…LLIKSLSRLL (264 aa)).

As to quaternary structure, homomultimer. Substrate-binding subunit of the TGD complex, a lipid translocator at the inner chloroplast envelope membrane made of TGD1, TGD2 and TGD3. Interacts with TGD1 and TGD3 with an overall subunit stoichiometry of 2 TGD1, 2 TGD3 and 8 to 12 TGD2. Interacts with TGD5.

The protein localises to the plastid. Its subcellular location is the chloroplast inner membrane. In terms of biological role, component of a phosphatidic acid/lipid transport complex in the chloroplast envelope. Specifically binds phosphatidic acid (PA). Involved in lipid transfer from the endoplasmic reticulum (ER) to plastids, and necessary for thylakoids formation. The sequence is that of Protein TRIGALACTOSYLDIACYLGLYCEROL 2, chloroplastic from Arabidopsis thaliana (Mouse-ear cress).